The sequence spans 226 residues: Enolase-phosphatase E1 (226 aa).

This sequence belongs to the HAD-like hydrolase superfamily. MasA/MtnC family. Monomer. Mg(2+) is required as a cofactor.

The catalysed reaction is 5-methylsulfanyl-2,3-dioxopentyl phosphate + H2O = 1,2-dihydroxy-5-(methylsulfanyl)pent-1-en-3-one + phosphate. It participates in amino-acid biosynthesis; L-methionine biosynthesis via salvage pathway; L-methionine from S-methyl-5-thio-alpha-D-ribose 1-phosphate: step 3/6. The protein operates within amino-acid biosynthesis; L-methionine biosynthesis via salvage pathway; L-methionine from S-methyl-5-thio-alpha-D-ribose 1-phosphate: step 4/6. Its function is as follows. Bifunctional enzyme that catalyzes the enolization of 2,3-diketo-5-methylthiopentyl-1-phosphate (DK-MTP-1-P) into the intermediate 2-hydroxy-3-keto-5-methylthiopentenyl-1-phosphate (HK-MTPenyl-1-P), which is then dephosphorylated to form the acireductone 1,2-dihydroxy-3-keto-5-methylthiopentene (DHK-MTPene). The protein is Enolase-phosphatase E1 of Shewanella baltica (strain OS195).